We begin with the raw amino-acid sequence, 35 residues long: Photosystem II reaction center protein T (35 aa).

The chain crosses the membrane as a helical span at residues 3 to 23 (ALVYTFLLVSTLGIIFFAIFF).

It belongs to the PsbT family. As to quaternary structure, PSII is composed of 1 copy each of membrane proteins PsbA, PsbB, PsbC, PsbD, PsbE, PsbF, PsbH, PsbI, PsbJ, PsbK, PsbL, PsbM, PsbT, PsbY, PsbZ, Psb30/Ycf12, at least 3 peripheral proteins of the oxygen-evolving complex and a large number of cofactors. It forms dimeric complexes.

The protein localises to the plastid. The protein resides in the chloroplast thylakoid membrane. Its function is as follows. Found at the monomer-monomer interface of the photosystem II (PS II) dimer, plays a role in assembly and dimerization of PSII. PSII is a light-driven water plastoquinone oxidoreductase, using light energy to abstract electrons from H(2)O, generating a proton gradient subsequently used for ATP formation. The polypeptide is Photosystem II reaction center protein T (Suaeda aralocaspica (Seablite)).